Here is a 144-residue protein sequence, read N- to C-terminus: Gastric inhibitory polypeptide (144 aa).

A signal peptide spans 1-21; that stretch reads MVALKTCSLLLVLLFLAVGLG. 2 consecutive propeptides follow at residues 22-42 and 87-144; these read EKEEVEFRSHAKFAGPRPRGP and EARA…LRSQ. Residues 92-112 are disordered; sequence ELAGQSQRNEEKEAQGSSLPK.

The protein belongs to the glucagon family. In terms of tissue distribution, highly expressed in the duodenum and jejunum.

Its subcellular location is the secreted. Potent stimulator of insulin secretion and relatively poor inhibitor of gastric acid secretion. The sequence is that of Gastric inhibitory polypeptide (Gip) from Rattus norvegicus (Rat).